The following is a 509-amino-acid chain: 2,3-bisphosphoglycerate-independent phosphoglycerate mutase (509 aa).

Residue Asp-11 participates in Mn(2+) binding. Tyr-35 is modified (phosphotyrosine). Ser-61 serves as a coordination point for Mn(2+). Residue Ser-61 is the Phosphoserine intermediate of the active site. Residues His-122, 152–153 (RD), Arg-184, Arg-190, 260–263 (RPDR), and Lys-335 each bind substrate. Residues Asp-402, His-406, Asp-443, His-444, and His-461 each contribute to the Mn(2+) site.

It belongs to the BPG-independent phosphoglycerate mutase family. Monomer. Mn(2+) serves as cofactor.

The catalysed reaction is (2R)-2-phosphoglycerate = (2R)-3-phosphoglycerate. Its pathway is carbohydrate degradation; glycolysis; pyruvate from D-glyceraldehyde 3-phosphate: step 3/5. Essential for rapid growth and for sporulation. Catalyzes the interconversion of 2-phosphoglycerate and 3-phosphoglycerate. The protein is 2,3-bisphosphoglycerate-independent phosphoglycerate mutase of Bacillus thuringiensis (strain Al Hakam).